The chain runs to 122 residues: Basic phospholipase A2 F15 (122 aa).

Intrachain disulfides connect cysteine 26–cysteine 115, cysteine 28–cysteine 44, cysteine 43–cysteine 95, cysteine 49–cysteine 122, cysteine 50–cysteine 88, cysteine 57–cysteine 81, and cysteine 75–cysteine 86. Tyrosine 27, glycine 29, and glycine 31 together coordinate Ca(2+). Residue histidine 47 is part of the active site. Aspartate 48 lines the Ca(2+) pocket. Aspartate 89 is an active-site residue.

Belongs to the phospholipase A2 family. Group II subfamily. D49 sub-subfamily. As to quaternary structure, when this protein is associated with crotapotin (F5 or F7), it forms the crotoxin protein. Ca(2+) is required as a cofactor. Expressed by the venom gland.

It is found in the secreted. The enzyme catalyses a 1,2-diacyl-sn-glycero-3-phosphocholine + H2O = a 1-acyl-sn-glycero-3-phosphocholine + a fatty acid + H(+). With respect to regulation, activated by heparin. Inhibited by its chaperone crotapotin. In terms of biological role, snake venom phospholipase A2 (PLA2) that shows moderate neurotoxic activity in isolated mouse phrenic nerve diaphragm but shows high neurotoxic activity in a chick biventer cervis preparation. Also shows a high bactericidal effect against both Gram-negative and Gram-positive bacteria. PLA2 catalyzes the calcium-dependent hydrolysis of the 2-acyl groups in 3-sn-phosphoglycerides. The sequence is that of Basic phospholipase A2 F15 from Crotalus durissus terrificus (South American rattlesnake).